Here is an 871-residue protein sequence, read N- to C-terminus: Mitochondrial 15S rRNA processing factor CCM1 (871 aa).

The N-terminal 72 residues, 1–72, are a transit peptide targeting the mitochondrion; that stretch reads MLGRRLAGAK…EFKLRQLREF (72 aa). 2 PPR repeats span residues 333–369 and 370–404; these read NKENYTVIAQFYTKLGLHDKAWDIFATMKFLSADHKP and DAKTYTCMLSLCNKEKNYAKAIDLFNEMIDLKVDP. A disordered region spans residues 704-724; that stretch reads RPGSSTHLTHSEIKKQPSSQT.

It belongs to the CCM1 family. In terms of assembly, binds to mitochondrial small subunit 15S rRNA.

The protein localises to the mitochondrion. Its function is as follows. Regulates mitochondrial small subunit maturation by controlling 15S rRNA 5'-end processing. Localizes to the 5' precursor of the 15S rRNA in a position that is subsequently occupied by mS47 in the mature yeast mtSSU. Uses structure and sequence-specific RNA recognition, binding to a single-stranded region of the precursor and specifically recognizing bases -6 to -1. The exchange of Ccm1 for mS47 is coupled to the irreversible removal of precursor rRNA that is accompanied by conformational changes of the mitoribosomal proteins uS5m and mS26. These conformational changes signal completion of 5'-end rRNA processing through protection of the mature 5'-end of the 15S rRNA and stabilization of mS47. The removal of the 5' precursor together with the dissociation of Ccm1 may be catalyzed by the 5'-3' exoribonuclease Pet127. Involved in the specific removal of group I introns in mitochondrial encoded transcripts. In Lachancea thermotolerans (strain ATCC 56472 / CBS 6340 / NRRL Y-8284) (Yeast), this protein is Mitochondrial 15S rRNA processing factor CCM1 (CCM1).